Here is a 380-residue protein sequence, read N- to C-terminus: Homoserine O-succinyltransferase (380 aa).

Positions 49 to 357 constitute an AB hydrolase-1 domain; the sequence is NAILICHALS…ESTHGHDAFL (309 aa). The active-site Nucleophile is the Ser-155. Arg-225 lines the substrate pocket. Active-site residues include Asp-320 and His-353. Position 354 (Asp-354) interacts with substrate.

Belongs to the AB hydrolase superfamily. MetX family. Homodimer.

The protein resides in the cytoplasm. It catalyses the reaction L-homoserine + succinyl-CoA = O-succinyl-L-homoserine + CoA. It functions in the pathway amino-acid biosynthesis; L-methionine biosynthesis via de novo pathway; O-succinyl-L-homoserine from L-homoserine: step 1/1. Functionally, transfers a succinyl group from succinyl-CoA to L-homoserine, forming succinyl-L-homoserine. The chain is Homoserine O-succinyltransferase from Laribacter hongkongensis (strain HLHK9).